We begin with the raw amino-acid sequence, 977 residues long: Short transient receptor potential channel 4 (977 aa).

Topologically, residues methionine 1–arginine 324 are cytoplasmic. ANK repeat units follow at residues leucine 29–lysine 60, arginine 71–asparagine 93, valine 96–histidine 118, and proline 141–glycine 165. Zn(2+)-binding residues include histidine 172, cysteine 176, cysteine 178, and cysteine 181. Residues leucine 223 to arginine 260 adopt a coiled-coil conformation. An intramembrane region (discontinuously helical) is located at residues histidine 325–isoleucine 359. Residues arginine 360–proline 362 are Cytoplasmic-facing. The chain crosses the membrane as a helical span at residues phenylalanine 363 to alanine 383. Over serine 384 to glutamate 403 the chain is Extracellular. A helical membrane pass occupies residues tryptophan 404 to isoleucine 418. Ca(2+) contacts are provided by glutamate 417, glutamine 420, asparagine 435, and aspartate 438. Over lysine 419–aspartate 432 the chain is Cytoplasmic. The chain crosses the membrane as a helical span at residues tryptophan 433 to isoleucine 453. Residues valine 454–leucine 475 are Extracellular-facing. Residues valine 476–alanine 498 form a helical membrane-spanning segment. The Cytoplasmic portion of the chain corresponds to asparagine 499–arginine 511. The helical transmembrane segment at methionine 512–leucine 534 threads the bilayer. Over asparagine 535–threonine 599 the chain is Extracellular. A disulfide bond links cysteine 549 and cysteine 554. The chain crosses the membrane as a helical span at residues methionine 600–methionine 620. Residues methionine 615–leucine 977 form an interaction with ITPR1, ITPR2 and ITPR3 region. Residues asparagine 621–leucine 977 lie on the Cytoplasmic side of the membrane. The interval isoleucine 762 to lysine 790 is disordered. Residues serine 764–alanine 775 show a composition bias toward low complexity. Over residues serine 777 to lysine 788 the composition is skewed to basic and acidic residues. 2 positions are modified to phosphotyrosine; by FYN: tyrosine 959 and tyrosine 972. The interval threonine 975–leucine 977 is PDZ-binding domain.

The protein belongs to the transient receptor (TC 1.A.4) family. STrpC subfamily. TRPC4 sub-subfamily. Homotetramer. Heterotetramer with TRPC1 and/or TRPC5. Forms a heteromeric ion channel with TRPC1, with a 1:3 TRPC1:TRPC4 stoichiometry. Interacts with TRPC4AP. Isoform alpha but not isoform beta interacts with ITPR1, ITPR2 and ITPR3. Interacts with (via PDZ-binding domain) with NHERF1. Interacts with MX1 and RNF24. Interacts (via CIRB domain) with SESTD1 (via spectrin 1 repeat). Interacts with CDH5 and CTNNB1. Interacts with SPTAN1 (via C-terminal spectrin repeats) and SPTBN5 (via C-terminus). Interacts (via protein 4.1-binding domain) with EPB41L2. Interacts with PLSCR1. Post-translationally, phosphorylation modulates TRPC channel function by regulating the level of TRPC4 at the cell surface and by increasing the association with NHERF1. As to expression, strongly expressed in placenta. Expressed at lower levels in heart, pancreas, kidney and brain. Expressed in endothelial cells. Isoform alpha was found to be the predominant isoform. Isoform beta was not found in pancreas and brain.

The protein resides in the cell membrane. The enzyme catalyses Ca(2+)(in) = Ca(2+)(out). The catalysed reaction is Na(+)(in) = Na(+)(out). It carries out the reaction Li(+)(in) = Li(+)(out). It catalyses the reaction Cs(+)(in) = Cs(+)(out). May be operated by a phosphatidylinositol second messenger system activated by receptor tyrosine kinases or G-protein coupled receptors. May be activated by intracellular calcium store depletion. Inhibited by xanthine-based inhibitor Pico145. Its function is as follows. Forms a receptor-activated non-selective calcium permeant cation channel. Acts as a cell-cell contact-dependent endothelial calcium entry channel. Forms a homomeric ion channel or a heteromeric ion channel with TRPC1; the heteromeric ion channel has reduced calcium permeability compared to the homomeric channel. Also permeable to monovalent ions including sodium, lithium and cesium ions. Forms a receptor-activated non-selective calcium permeant cation channel. This chain is Short transient receptor potential channel 4 (TRPC4), found in Homo sapiens (Human).